Here is a 123-residue protein sequence, read N- to C-terminus: Small ribosomal subunit protein uS12cz/uS12cy (123 aa).

The protein belongs to the universal ribosomal protein uS12 family. Part of the 30S ribosomal subunit.

The protein localises to the plastid. The protein resides in the chloroplast. In terms of biological role, with S4 and S5 plays an important role in translational accuracy. Located at the interface of the 30S and 50S subunits. The protein is Small ribosomal subunit protein uS12cz/uS12cy (rps12-A) of Citrus sinensis (Sweet orange).